The following is a 121-amino-acid chain: Large ribosomal subunit protein bL12 (121 aa).

The protein belongs to the bacterial ribosomal protein bL12 family. As to quaternary structure, homodimer. Part of the ribosomal stalk of the 50S ribosomal subunit. Forms a multimeric L10(L12)X complex, where L10 forms an elongated spine to which 2 to 4 L12 dimers bind in a sequential fashion. Binds GTP-bound translation factors.

Functionally, forms part of the ribosomal stalk which helps the ribosome interact with GTP-bound translation factors. Is thus essential for accurate translation. In Bacillus pumilus (strain SAFR-032), this protein is Large ribosomal subunit protein bL12.